Consider the following 519-residue polypeptide: Maturase K (519 aa).

The protein belongs to the intron maturase 2 family. MatK subfamily.

The protein resides in the plastid. It localises to the chloroplast. In terms of biological role, usually encoded in the trnK tRNA gene intron. Probably assists in splicing its own and other chloroplast group II introns. The sequence is that of Maturase K from Aesculus pavia (Red buckeye).